The primary structure comprises 306 residues: Ornithine carbamoyltransferase (306 aa).

Carbamoyl phosphate is bound by residues 53-56, Q80, R104, and 131-134; these read STRT and HPCQ. Residues N162, D220, and 224–225 contribute to the L-ornithine site; that span reads SM. Carbamoyl phosphate is bound by residues 260–261 and R288; that span reads CL.

Belongs to the aspartate/ornithine carbamoyltransferase superfamily. OTCase family.

The protein resides in the cytoplasm. The enzyme catalyses carbamoyl phosphate + L-ornithine = L-citrulline + phosphate + H(+). Its pathway is amino-acid biosynthesis; L-arginine biosynthesis; L-arginine from L-ornithine and carbamoyl phosphate: step 1/3. Its function is as follows. Reversibly catalyzes the transfer of the carbamoyl group from carbamoyl phosphate (CP) to the N(epsilon) atom of ornithine (ORN) to produce L-citrulline. In Methylobacillus flagellatus (strain ATCC 51484 / DSM 6875 / VKM B-1610 / KT), this protein is Ornithine carbamoyltransferase.